An 872-amino-acid chain; its full sequence is MFVNLHTNSYYNFLNSTLSPQKLVDLAVQDQQVAVCLTDPNLFGATEFFLACQKAHIKPLIGLSVTVRHYEQNVNLLVIAQTNRGYQNLMCLALVKDQPDLQLEPFLDGNVVIICTQTELRLNTANPVYLAHGLSGRYPKIAVTQKPVKCQNTNKDLTLLLTLKQISQINSEHFQPLEWKLSRSLNEIQLDPPLLQQLRHQPFLSQKAAQQIFSEEELGNLQKLVEQSQWDLTKLKASSLQVSHNDAQMLSEQCQLALTEFLKLNPQLNKQLYEERLAKELEIINSLHFASYFLVVSDLVQFAHNNDILIGPGRGSAVGSLVAFLLKITQIDPVANNLIFERFISRHRQGLPDIDIDIMETKRDLVIDYVMQKYGREQCAQIVTFQKFKTRSALRDVGKVFNHIEGAEDLLGKLPKDKSLLELDVNGVTDPVLQLSLKSFRLLWEVAREIINFPRQPSIHASGVVIVTEPLITTIPLMVGNNNNYVTQVSMDWLEWYNLNKFDLLGLINLTMIHEVVQAVKPKEVSVQQFLQQIPLDDEATFTNLTNQATLGVFQLESFGMKKVLKQIKPHNLHDLAIVLALYRPGPQDNINTFIANRNLGFDTSDIDPRILPILKETYGVLIFQEQVINIAKTVANYSLETADSFRRAISKKNLQVIQDNMRSFYEGALANNFSLKAATTIFNYIQRFAGYGFNLSHALGYALLSYWTAWLKTHYFEQFNLWWLNHEQGKKEKQKQLLNEFISSGYEICPPLINKAKSDFSVQDKKLYLGFKLINGIGDKQAHALEHVQEVLKQNPNLSLIATVNLCLSKTVGGLELKDITLLQQAGCFNCFNYTVDFNLAKSFWVQSNHELFPKIPLDQPPVINWKSFGF.

Belongs to the DNA polymerase type-C family. DnaE subfamily. DNA polymerase III contains a core (composed of alpha, epsilon and theta chains) that associates with a tau subunit. This core dimerizes to form the PolIII' complex. PolIII' associates with the gamma complex (composed of gamma, delta, delta', psi and chi chains) and with the beta chain to form the complete DNA polymerase III complex.

The protein localises to the cytoplasm. The catalysed reaction is DNA(n) + a 2'-deoxyribonucleoside 5'-triphosphate = DNA(n+1) + diphosphate. DNA polymerase III is a complex, multichain enzyme responsible for most of the replicative synthesis in bacteria. This DNA polymerase also exhibits 3' to 5' exonuclease activity. The alpha chain is the DNA polymerase. This is DNA polymerase III subunit alpha (dnaE) from Mycoplasma pneumoniae (strain ATCC 29342 / M129 / Subtype 1) (Mycoplasmoides pneumoniae).